Consider the following 370-residue polypeptide: MTTTPLILLAAGGTGGHLFPAEALGVELMKRDLRVRLVTDSRALRYSGLFSKDMTDVVPSETVRGRSPLALARTGLMLATGTVVALNLMRRLKPAAVIGFGGYPTLPPLIAARLKGIPTVIHDANAVMGRANRLLSRRVNAIATSLPGVLDKEPSLIGKTTTTGTPMRPAILAASTVPFATPGSDGPLRVLVVGGSQGARVMSDIVPGAIEKLGSPLWQRLVLTQQVRDEDMARVRAVYERLRINAELAPFFADLPSRLASSHIIVSRSGAGTVAELGAIGRPSILVPLPGAIDQDQFANAGVLADVGGAIRIVQSDFTPDRLAAELSALAADPARLAAMAAAARTVGRLDAAERLADLVMKVARLDSPA.

Residues 14–16 (TGG), asparagine 125, arginine 168, serine 196, and glutamine 297 each bind UDP-N-acetyl-alpha-D-glucosamine.

It belongs to the glycosyltransferase 28 family. MurG subfamily.

Its subcellular location is the cell inner membrane. It catalyses the reaction di-trans,octa-cis-undecaprenyl diphospho-N-acetyl-alpha-D-muramoyl-L-alanyl-D-glutamyl-meso-2,6-diaminopimeloyl-D-alanyl-D-alanine + UDP-N-acetyl-alpha-D-glucosamine = di-trans,octa-cis-undecaprenyl diphospho-[N-acetyl-alpha-D-glucosaminyl-(1-&gt;4)]-N-acetyl-alpha-D-muramoyl-L-alanyl-D-glutamyl-meso-2,6-diaminopimeloyl-D-alanyl-D-alanine + UDP + H(+). It functions in the pathway cell wall biogenesis; peptidoglycan biosynthesis. Cell wall formation. Catalyzes the transfer of a GlcNAc subunit on undecaprenyl-pyrophosphoryl-MurNAc-pentapeptide (lipid intermediate I) to form undecaprenyl-pyrophosphoryl-MurNAc-(pentapeptide)GlcNAc (lipid intermediate II). This is UDP-N-acetylglucosamine--N-acetylmuramyl-(pentapeptide) pyrophosphoryl-undecaprenol N-acetylglucosamine transferase from Nitrobacter hamburgensis (strain DSM 10229 / NCIMB 13809 / X14).